The following is a 239-amino-acid chain: Lysophospholipase-like protein 1 (239 aa).

Ala2 bears the N-acetylalanine mark. Catalysis depends on charge relay system residues Ser125, Asp180, and His212.

It belongs to the AB hydrolase superfamily. AB hydrolase 2 family.

The protein resides in the cytoplasm. It localises to the cytosol. The catalysed reaction is S-hexadecanoyl-L-cysteinyl-[protein] + H2O = L-cysteinyl-[protein] + hexadecanoate + H(+). Palmitoyl thioesterase that catalyzes depalmitoylation of CGAS and KCNMA1. Acts as a regulator of innate immunity by mediating depalmitoylation of CGAS, thereby preventing CGAS homodimerization and cyclic GMP-AMP synthase activity. Does not exhibit phospholipase nor triacylglycerol lipase activity, able to hydrolyze only short chain substrates due to its shallow active site. This Mus musculus (Mouse) protein is Lysophospholipase-like protein 1.